The chain runs to 78 residues: Large ribosomal subunit protein bL28 (78 aa).

Positions 1-22 (MSKVCQVTGKRPTTGNNVSHAN) are disordered. Polar residues predominate over residues 11-22 (RPTTGNNVSHAN).

This sequence belongs to the bacterial ribosomal protein bL28 family.

The protein is Large ribosomal subunit protein bL28 of Alkalilimnicola ehrlichii (strain ATCC BAA-1101 / DSM 17681 / MLHE-1).